The following is a 1379-amino-acid chain: DNA-directed RNA polymerase subunit beta'' (1379 aa).

The Zn(2+) site is built by cysteine 220, cysteine 293, cysteine 300, and cysteine 303.

Belongs to the RNA polymerase beta' chain family. RpoC2 subfamily. In plastids the minimal PEP RNA polymerase catalytic core is composed of four subunits: alpha, beta, beta', and beta''. When a (nuclear-encoded) sigma factor is associated with the core the holoenzyme is formed, which can initiate transcription. Zn(2+) serves as cofactor.

It localises to the plastid. Its subcellular location is the chloroplast. It carries out the reaction RNA(n) + a ribonucleoside 5'-triphosphate = RNA(n+1) + diphosphate. In terms of biological role, DNA-dependent RNA polymerase catalyzes the transcription of DNA into RNA using the four ribonucleoside triphosphates as substrates. The chain is DNA-directed RNA polymerase subunit beta'' from Crucihimalaya wallichii (Rock-cress).